We begin with the raw amino-acid sequence, 292 residues long: Transcription factor HFR1 (292 aa).

A disordered region spans residues 114–153 (KRRIQVLSSDDESEEFTREVPSVTRKGSKRRRRDEKMSNK). The segment at 134–147 (PSVTRKGSKRRRRD) is basic motif; degenerate. The bHLH domain occupies 134–183 (PSVTRKGSKRRRRDEKMSNKMRKLQQLVPNCHKTDKVSVLDKTIEYMKNL). Positions 139–153 (KGSKRRRRDEKMSNK) are enriched in basic residues. The short motif at 141–148 (SKRRRRDE) is the Nuclear localization signal element. Positions 148–183 (EKMSNKMRKLQQLVPNCHKTDKVSVLDKTIEYMKNL) are helix-loop-helix motif.

Binds to FHY1 and FHL. Forms PHYA/FHY1/HFR1 complex. Homodimer and heterodimer with PIF3. Do not interact alone with either phytochrome A (phyA) or B (phyB), but REP1/PIF3 complex binds to phyA and phyB, preferentially to the Pfr forms. Forms non-functional heterodimer with PRE6, causing liberation of PIF4 from the transcriptionally inactive complex HFR1-PIF4. Repressed when bound to PRE1, PRE2 and PRE4. As to expression, mainly expressed in fruits and flowers and, to a lower extent, in leaves, stems, seedlings and roots.

Its subcellular location is the nucleus. Its function is as follows. Atypical bHLH transcription factor that regulates photomorphogenesis through modulation of phytochrome (e.g. PHYA) and cryptochrome signalings. Suppresses the transcriptional regulation activity of PIF4 by forming non-DNA-binding heterodimer. The sequence is that of Transcription factor HFR1 from Arabidopsis thaliana (Mouse-ear cress).